A 660-amino-acid polypeptide reads, in one-letter code: Bifunctional polymyxin resistance protein ArnA (660 aa).

Residues 1–304 (MKTVVFAYHD…TLGLVQGSRL (304 aa)) form a formyltransferase ArnAFT region. 86–88 (HLI) is a (6R)-10-formyltetrahydrofolate binding site. His-104 (proton donor; for formyltransferase activity) is an active-site residue. (6R)-10-formyltetrahydrofolate contacts are provided by residues Arg-114 and 136 to 140 (VKRAD). The dehydrogenase ArnADH stretch occupies residues 314–660 (RRTRVLILGV…RTVDLTDKPS (347 aa)). NAD(+) contacts are provided by residues Asp-347 and 368–369 (DI). UDP-alpha-D-glucuronate is bound by residues Ala-393, Tyr-398, and 432–433 (TS). The active-site Proton acceptor; for decarboxylase activity is the Glu-434. UDP-alpha-D-glucuronate-binding positions include Arg-460, Asn-492, 526–535 (KLIDGGKQKR), and Tyr-613. The active-site Proton donor; for decarboxylase activity is the Arg-619.

This sequence in the N-terminal section; belongs to the Fmt family. UDP-L-Ara4N formyltransferase subfamily. In the C-terminal section; belongs to the NAD(P)-dependent epimerase/dehydratase family. UDP-glucuronic acid decarboxylase subfamily. In terms of assembly, homohexamer, formed by a dimer of trimers.

The catalysed reaction is UDP-alpha-D-glucuronate + NAD(+) = UDP-beta-L-threo-pentopyranos-4-ulose + CO2 + NADH. It carries out the reaction UDP-4-amino-4-deoxy-beta-L-arabinose + (6R)-10-formyltetrahydrofolate = UDP-4-deoxy-4-formamido-beta-L-arabinose + (6S)-5,6,7,8-tetrahydrofolate + H(+). The protein operates within nucleotide-sugar biosynthesis; UDP-4-deoxy-4-formamido-beta-L-arabinose biosynthesis; UDP-4-deoxy-4-formamido-beta-L-arabinose from UDP-alpha-D-glucuronate: step 1/3. Its pathway is nucleotide-sugar biosynthesis; UDP-4-deoxy-4-formamido-beta-L-arabinose biosynthesis; UDP-4-deoxy-4-formamido-beta-L-arabinose from UDP-alpha-D-glucuronate: step 3/3. It participates in bacterial outer membrane biogenesis; lipopolysaccharide biosynthesis. Its function is as follows. Bifunctional enzyme that catalyzes the oxidative decarboxylation of UDP-glucuronic acid (UDP-GlcUA) to UDP-4-keto-arabinose (UDP-Ara4O) and the addition of a formyl group to UDP-4-amino-4-deoxy-L-arabinose (UDP-L-Ara4N) to form UDP-L-4-formamido-arabinose (UDP-L-Ara4FN). The modified arabinose is attached to lipid A and is required for resistance to polymyxin and cationic antimicrobial peptides. The chain is Bifunctional polymyxin resistance protein ArnA from Escherichia coli O81 (strain ED1a).